Reading from the N-terminus, the 188-residue chain is Archaetidylinositol phosphate synthase (188 aa).

2 helical membrane-spanning segments follow: residues 20–40 and 51–71; these read LASL…ITLL and ILAG…GALA. Residues aspartate 64, aspartate 67, aspartate 85, and aspartate 89 each coordinate Mg(2+). The active-site Proton acceptor is the aspartate 89. Transmembrane regions (helical) follow at residues 96–116 and 147–167; these read ILFG…LTLI and IIII…YLVA.

The protein belongs to the CDP-alcohol phosphatidyltransferase class-I family. Mn(2+) serves as cofactor. It depends on Mg(2+) as a cofactor.

It localises to the cell membrane. It catalyses the reaction CDP-2,3-bis-O-(phytanyl)-sn-glycerol + 1D-myo-inositol 3-phosphate = saturated 1-archaetidyl-1D-myo-inositol 3-phosphate + CMP + H(+). Its pathway is lipid metabolism; phospholipid metabolism. In terms of biological role, catalyzes the formation of archaetidylinositol phosphate (AIP) from CDP-archaeol (CDP-ArOH or CDP-2,3-bis-(O-phytanyl)-sn-glycerol) and 1L-myo-inositol 1-phosphate (IP or 1D-myo-inositol 3-phosphate). AIP is a precursor of archaetidyl-myo-inositol (AI), an ether-type inositol phospholipid ubiquitously distributed in archaea membranes and essential for glycolipid biosynthesis in archaea. The chain is Archaetidylinositol phosphate synthase from Pyrococcus horikoshii (strain ATCC 700860 / DSM 12428 / JCM 9974 / NBRC 100139 / OT-3).